We begin with the raw amino-acid sequence, 565 residues long: MINVNHERTMTVARKRGFLWSSFEIYSGVAGFVDYGPLGATLKNKIMNRWREFYVVREGFYEIESPTIMPEEALKASGHVDHFNDPMTQCKECMDVYRADHIIEDATGRDVEGLENQELTEIISDEGIRCPRCGGHLTHVWSYNLMFQTLIGARGKKTGYLRPETAQGIFIPFKRLLRFFRNRLPFGVVQLGKSYRNEISPRQGVIRLREFTQAEAEIFVDPEHKTHPDFEEVKEDILRLYPAGRQMEESGTVDMTAAEALEAGVISSEVLTYHLCLAKRFLMDIGIPEDALRFRQHLPSEMAHYAIDCWDVEAFTDSYGWIEIIGIADRTDYDLRSHSQHSGEDLRVFIEYDEPRRIRKRAVKPDMGKLGPKFRKDAARIASALSEVDVEEIEKALDEEGRFILEGEFEILPDDVSFEDVEEVVTGRKVYPHVIEPSFGIDRIIYTLLLHSLVDDGERTYFRLPPHVAPVEVTVLPLVNREEMVMTALEIERNLRRSGFIAEFDSSGTIGRRYARADEIGVPFAVTVDHETLEDGTVTLRNRDDCSQVRVKIEELVPTLEKLRG.

Substrate is bound by residues arginine 98 and glutamate 164. Residues 196–198 (RNE), 206–211 (IRLREF), 323–324 (EI), and 440–443 (GIDR) each bind ATP. A substrate-binding site is contributed by 211–215 (FTQAE). Position 436–440 (436–440 (EPSFG)) interacts with substrate.

It belongs to the class-II aminoacyl-tRNA synthetase family.

It is found in the cytoplasm. It catalyses the reaction tRNA(Gly) + glycine + ATP = glycyl-tRNA(Gly) + AMP + diphosphate. In terms of biological role, catalyzes the attachment of glycine to tRNA(Gly). This chain is Glycine--tRNA ligase, found in Methanothermobacter thermautotrophicus (strain ATCC 29096 / DSM 1053 / JCM 10044 / NBRC 100330 / Delta H) (Methanobacterium thermoautotrophicum).